Consider the following 211-residue polypeptide: Thymidylate kinase (211 aa).

11–18 (GPDGAGKT) is a binding site for ATP.

The protein belongs to the thymidylate kinase family.

The enzyme catalyses dTMP + ATP = dTDP + ADP. Functionally, phosphorylation of dTMP to form dTDP in both de novo and salvage pathways of dTTP synthesis. The protein is Thymidylate kinase of Streptococcus equi subsp. equi (strain 4047).